A 91-amino-acid polypeptide reads, in one-letter code: Insertion element IS1 1 protein InsA (91 aa).

Belongs to the IS1 elements InsA family.

Its function is as follows. Absolutely required for transposition of IS1. This Escherichia coli (strain K12) protein is Insertion element IS1 1 protein InsA (insA1).